Here is a 186-residue protein sequence, read N- to C-terminus: Peptidyl-tRNA hydrolase (186 aa).

A tRNA-binding site is contributed by Y14. The active-site Proton acceptor is the H19. The tRNA site is built by Y60 and N62.

It belongs to the PTH family. As to quaternary structure, monomer.

It is found in the cytoplasm. It carries out the reaction an N-acyl-L-alpha-aminoacyl-tRNA + H2O = an N-acyl-L-amino acid + a tRNA + H(+). Functionally, hydrolyzes ribosome-free peptidyl-tRNAs (with 1 or more amino acids incorporated), which drop off the ribosome during protein synthesis, or as a result of ribosome stalling. Its function is as follows. Catalyzes the release of premature peptidyl moieties from peptidyl-tRNA molecules trapped in stalled 50S ribosomal subunits, and thus maintains levels of free tRNAs and 50S ribosomes. The polypeptide is Peptidyl-tRNA hydrolase (Mycoplasmopsis pulmonis (strain UAB CTIP) (Mycoplasma pulmonis)).